The sequence spans 333 residues: Anthranilate phosphoribosyltransferase (333 aa).

5-phospho-alpha-D-ribose 1-diphosphate contacts are provided by residues G81, 84–85 (GN), T89, 91–94 (NIST), 109–117 (KHGNRSVSS), and A121. G81 provides a ligand contact to anthranilate. A Mg(2+)-binding site is contributed by S93. N112 is a binding site for anthranilate. Residue R167 participates in anthranilate binding. Mg(2+)-binding residues include D225 and E226.

This sequence belongs to the anthranilate phosphoribosyltransferase family. Homodimer. Mg(2+) is required as a cofactor.

It catalyses the reaction N-(5-phospho-beta-D-ribosyl)anthranilate + diphosphate = 5-phospho-alpha-D-ribose 1-diphosphate + anthranilate. Its pathway is amino-acid biosynthesis; L-tryptophan biosynthesis; L-tryptophan from chorismate: step 2/5. In terms of biological role, catalyzes the transfer of the phosphoribosyl group of 5-phosphorylribose-1-pyrophosphate (PRPP) to anthranilate to yield N-(5'-phosphoribosyl)-anthranilate (PRA). This is Anthranilate phosphoribosyltransferase from Haemophilus influenzae (strain ATCC 51907 / DSM 11121 / KW20 / Rd).